An 891-amino-acid polypeptide reads, in one-letter code: Protein translocase subunit SecA (891 aa).

Residues glutamine 83, glycine 101–threonine 105, and aspartate 489 each bind ATP.

It belongs to the SecA family.

It localises to the plastid. Its subcellular location is the chloroplast stroma. The protein resides in the chloroplast thylakoid membrane. It carries out the reaction ATP + H2O + cellular proteinSide 1 = ADP + phosphate + cellular proteinSide 2.. Has a central role in coupling the hydrolysis of ATP to the transfer of proteins across the thylakoid membrane. The polypeptide is Protein translocase subunit SecA (Diacronema lutheri (Unicellular marine alga)).